A 445-amino-acid chain; its full sequence is Peptide chain release factor 1, mitochondrial (445 aa).

The transit peptide at 1-61 (MNRHLCVWLF…LLSKNWSRRY (61 aa)) directs the protein to the mitochondrion. The tract at residues 297 to 361 (PKDLRIDTFR…LRARLYQQII (65 aa)) is GGQ domain. The GGQ motif lies at 311-313 (GGQ). Position 313 is an N5-methylglutamine (Q313).

This sequence belongs to the prokaryotic/mitochondrial release factor family. Methylation of glutamine in the GGQ triplet by HEMK1 is conserved from bacteria to mammals.

It localises to the mitochondrion. Mitochondrial peptide chain release factor that directs the termination of translation in response to the peptide chain non-canonical stop codons AGG and AGA. Non-canonical termination codons AGG and AGA are found at the end of MT-CO1/COX1 and MT-ND6/ND6 open reading frames, respectively. Recognizes non-canonical stop codons via a network of interactions between the codon, MTRF1 and the ribosomal RNA (rRNA): in contrast to other translation release factors, which identify the codon in the A-site via direct interactions of amino acid side chains with the bases, MTRF1 repositions the first 2 bases of the stop codon to use an intricate network of interactions that includes residues of the release factor, the rRNA of the small ribosomal subunit, as well as neighboring bases of the mRNA. The polypeptide is Peptide chain release factor 1, mitochondrial (Homo sapiens (Human)).